A 70-amino-acid polypeptide reads, in one-letter code: Small ribosomal subunit protein bS21 (70 aa).

This sequence belongs to the bacterial ribosomal protein bS21 family.

The sequence is that of Small ribosomal subunit protein bS21 from Chromobacterium violaceum (strain ATCC 12472 / DSM 30191 / JCM 1249 / CCUG 213 / NBRC 12614 / NCIMB 9131 / NCTC 9757 / MK).